Reading from the N-terminus, the 100-residue chain is RxLR effector protein PITG_18683 (100 aa).

Positions 1–22 (MRSFLYGILAFAVLARSSAVAA) are cleaved as a signal peptide. Residues 43 to 57 (RSLRVEAQEVIQSGR) carry the RxLR-dEER motif. A Calmodulin-binding motif motif is present at residues 78–82 (KPDIK).

It belongs to the RxLR effector family. In terms of assembly, interacts with the host calmodulin.

It is found in the secreted. It localises to the host cell. Functionally, secreted effector that associates with calmodulin to interfere with plant defense-associated calcium signaling in hosts. This Phytophthora infestans (strain T30-4) (Potato late blight agent) protein is RxLR effector protein PITG_18683.